The following is a 403-amino-acid chain: Argininosuccinate synthase (403 aa).

ATP contacts are provided by residues 13–21 (AYSGGLDTS) and alanine 40. Tyrosine 92 and serine 97 together coordinate L-citrulline. Glycine 122 is an ATP binding site. L-aspartate-binding residues include threonine 124, asparagine 128, and aspartate 129. Residue asparagine 128 participates in L-citrulline binding. The L-citrulline site is built by arginine 132, serine 181, serine 190, glutamate 266, and tyrosine 278.

It belongs to the argininosuccinate synthase family. Type 1 subfamily. As to quaternary structure, homotetramer.

The protein localises to the cytoplasm. It carries out the reaction L-citrulline + L-aspartate + ATP = 2-(N(omega)-L-arginino)succinate + AMP + diphosphate + H(+). Its pathway is amino-acid biosynthesis; L-arginine biosynthesis; L-arginine from L-ornithine and carbamoyl phosphate: step 2/3. In Aliivibrio salmonicida (strain LFI1238) (Vibrio salmonicida (strain LFI1238)), this protein is Argininosuccinate synthase.